The chain runs to 103 residues: Large ribosomal subunit protein bL21 (103 aa).

The protein belongs to the bacterial ribosomal protein bL21 family. As to quaternary structure, part of the 50S ribosomal subunit. Contacts protein L20.

Functionally, this protein binds to 23S rRNA in the presence of protein L20. In Chromobacterium violaceum (strain ATCC 12472 / DSM 30191 / JCM 1249 / CCUG 213 / NBRC 12614 / NCIMB 9131 / NCTC 9757 / MK), this protein is Large ribosomal subunit protein bL21.